The chain runs to 58 residues: Metallothionein (58 aa).

The interval 1–29 (MPDPCCIDKCECKEGGCKAGCKCTSCRCT) is beta. Positions 5, 6, 10, 12, 17, 21, 23, 26, 28, 31, 34, 38, 40, 46, 50, 54, 56, and 57 each coordinate a divalent metal cation. Positions 30 to 58 (PCEKCSSGCKCTTKEDCCKTCTKPCSCCP) are alpha.

This sequence belongs to the metallothionein superfamily. Type 3 family.

Functionally, metallothioneins have a high content of cysteine residues that bind various heavy metals. Class I MTS in marine crustacea are involved in the sequestration of elevated levels of heavy-metal ions. The chain is Metallothionein from Carcinus maenas (Common shore crab).